The primary structure comprises 317 residues: Pantothenate kinase (317 aa).

101–108 (GSVAVGKS) provides a ligand contact to ATP.

This sequence belongs to the prokaryotic pantothenate kinase family.

Its subcellular location is the cytoplasm. It catalyses the reaction (R)-pantothenate + ATP = (R)-4'-phosphopantothenate + ADP + H(+). It functions in the pathway cofactor biosynthesis; coenzyme A biosynthesis; CoA from (R)-pantothenate: step 1/5. This Actinobacillus succinogenes (strain ATCC 55618 / DSM 22257 / CCUG 43843 / 130Z) protein is Pantothenate kinase.